Here is a 443-residue protein sequence, read N- to C-terminus: KH domain-containing, RNA-binding, signal transduction-associated protein 1 (443 aa).

The disordered stretch occupies residues 1-95 (MQRRDDPAAR…LLPPSATAAA (95 aa)). Phosphoserine is present on residues serine 18 and serine 20. Lysine 21 bears the N6-acetyllysine mark. Serine 29 is modified (phosphoserine). Threonine 33 carries the post-translational modification Phosphothreonine. 2 positions are modified to asymmetric dimethylarginine; by PRMT1: arginine 45 and arginine 52. Serine 58 is modified (phosphoserine). Over residues 61–72 (TQPPPLLPPSNP) the composition is skewed to pro residues. A compositionally biased stretch (low complexity) spans 81 to 95 (SAPTPLLPPSATAAA). Position 84 is a phosphothreonine; by MAPK1 (threonine 84). Residues lysine 96 and lysine 102 each participate in a glycyl lysine isopeptide (Lys-Gly) (interchain with G-Cter in SUMO2) cross-link. Residues 100 to 260 (ENKYLPELMA…VKKFLVPDMM (161 aa)) form an involved in homodimerization region. Serine 113 carries the phosphoserine modification. Lysine 139 participates in a covalent cross-link: Glycyl lysine isopeptide (Lys-Gly) (interchain with G-Cter in SUMO2). Serine 150 bears the Phosphoserine mark. Residues 171–197 (NFVGKILGPQGNTIKRLQEETGAKISV) enclose the KH domain. Lysine 175 is subject to N6-acetyllysine; alternate. Residue lysine 175 forms a Glycyl lysine isopeptide (Lys-Gly) (interchain with G-Cter in SUMO2); alternate linkage. Threonine 183 is subject to Phosphothreonine. Residues 280–317 (PSRGRGVSVRGRGAAPPPPPVPRGRGVGPPRGALVRGT) are disordered. Omega-N-methylarginine is present on residues arginine 282, arginine 284, and arginine 291. Positions 283-293 (GRGVSVRGRGA) are enriched in low complexity. An Asymmetric dimethylarginine; by PRMT1 modification is found at arginine 304. Residues 307–316 (GPPRGALVRG) show a composition bias toward low complexity. Residues arginine 310 and arginine 315 each carry the omega-N-methylarginine; by PRMT1 modification. Arginine 320 is modified (dimethylated arginine; alternate). Arginine 320 is modified (omega-N-methylarginine; by PRMT1; alternate). Arginine 325 is modified (omega-N-methylarginine; by PRMT1). The interval 326–345 (GATVTRGVPPPPTVRGAPTP) is disordered. A dimethylated arginine; alternate mark is found at arginine 331 and arginine 340. Omega-N-methylarginine; by PRMT1; alternate is present on residues arginine 331 and arginine 340. Arginine 331 bears the Asymmetric dimethylarginine; alternate mark. Residues 351-443 (GIQRIPLPPT…AYREHPYGRY (93 aa)) form an interaction with HNRNPA1 region. Tyrosine 387 bears the Phosphotyrosine mark. Serine 390 carries the post-translational modification Phosphoserine. Positions 400-420 (GHGELQDSYEAYGQDDWNGTR) are interaction with ZBTB7A. Residues 411–443 (YGQDDWNGTRPSLKAPPARPVKGAYREHPYGRY) form a disordered region. Residue lysine 432 forms a Glycyl lysine isopeptide (Lys-Gly) (interchain with G-Cter in SUMO2) linkage. Basic and acidic residues predominate over residues 434-443 (AYREHPYGRY). Phosphotyrosine; by PTK6 is present on residues tyrosine 435, tyrosine 440, and tyrosine 443.

Belongs to the KHDRBS family. Self-associates to form homooligomers when bound to RNA, oligomerization appears to be limited when binding to proteins. Interacts with KHDRBS3/SLIM-2. Forms a trimeric complex in the nucleus consisting of BANP, HDAC6 and KHDRBS1/SAM68; HDAC6 keeps KHDRBS1 in a deacetylated state which inhibits the inclusion of CD44 alternate exons. The complex is disrupted by MAPK1/MAPK3-mediated phosphorylation of BANP which results in BANP export to the cytoplasm. This facilitates acetylation of KHDRBS1 and CD44 variant exon inclusion. Interacts with KHDRBS2/SLIM-1; heterooligomer formation of KHDRBS family proteins may modulate RNA substrate specificity. Interacts with PIK3R1, PLCG1. Interacts with RASA1, GRB2, SRC, CBP, PRMT1, APC, HNRNPA1. Interacts with PTK6 (via SH3 and SH2 domains). Forms a complex with ILF2, ILF3, YLPM1, RBMX, NCOA5 and PPP1CA. Binds WBP4/FBP21 (via WW domains), FNBP4/FBP30 (via WW domains). Interacts (via Arg/Gly-rich-flanked Pro-rich regions) with FYN (via the SH3 domain). Interacts with the non-receptor tyrosine kinase SRMS; the interaction leads to phosphorylation of KHDRBS1. Interacts with ZBTB7A; negatively regulates KHDRBS1 splicing activity toward BCL2L1. Post-translationally, tyrosine phosphorylated by several non-receptor tyrosine kinases including LCK, FYN and JAK3. Also tyrosine phosphorylated by the non-receptor tyrosine kinase SRMS in an EGF-dependent manner. Phosphorylation by PTK6 negatively regulates its RNA binding ability. Phosphorylation by PTK6 at Tyr-440 dictates the nuclear localization of KHDRBS1. In terms of processing, acetylated. Positively correlates with ability to bind RNA. Deacetylated by HDAC6; this regulates alternative splicing by inhibiting the inclusion of CD44 alternate exons. Arginine methylation is required for nuclear localization, Inhibits interaction with Src-like SH3 domains, but not interaction with WW domains of WBP4/FBP21 and FNBP4/FBP30.

The protein resides in the nucleus. It is found in the cytoplasm. Its subcellular location is the membrane. In terms of biological role, recruited and tyrosine phosphorylated by several receptor systems, for example the T-cell, leptin and insulin receptors. Once phosphorylated, functions as an adapter protein in signal transduction cascades by binding to SH2 and SH3 domain-containing proteins. Role in G2-M progression in the cell cycle. Represses CBP-dependent transcriptional activation apparently by competing with other nuclear factors for binding to CBP. Also acts as a putative regulator of mRNA stability and/or translation rates and mediates mRNA nuclear export. Positively regulates the association of constitutive transport element (CTE)-containing mRNA with large polyribosomes and translation initiation. May not be involved in the nucleocytoplasmic export of unspliced (CTE)-containing RNA species. RNA-binding protein that plays a role in the regulation of alternative splicing and influences mRNA splice site selection and exon inclusion. Binds to RNA containing 5'-[AU]UAA-3' as a bipartite motif spaced by more than 15 nucleotides. Binds poly(A). Can regulate CD44 alternative splicing in a Ras pathway-dependent manner. In cooperation with HNRNPA1 modulates alternative splicing of BCL2L1 by promoting splicing toward isoform Bcl-X(S), and of SMN1. Can regulate alternative splicing of NRXN1 and NRXN3 in the laminin G-like domain 6 containing the evolutionary conserved neurexin alternative spliced segment 4 (AS4) involved in neurexin selective targeting to postsynaptic partners. In a neuronal activity-dependent manner cooperates synergistically with KHDRBS2/SLIM-1 in regulation of NRXN1 exon skipping at AS4. The cooperation with KHDRBS2/SLIM-1 is antagonistic for regulation of NXRN3 alternative splicing at AS4. The polypeptide is KH domain-containing, RNA-binding, signal transduction-associated protein 1 (Rattus norvegicus (Rat)).